We begin with the raw amino-acid sequence, 104 residues long: Urease subunit beta (104 aa).

The protein belongs to the urease beta subunit family. In terms of assembly, heterotrimer of UreA (gamma), UreB (beta) and UreC (alpha) subunits. Three heterotrimers associate to form the active enzyme.

It localises to the cytoplasm. It carries out the reaction urea + 2 H2O + H(+) = hydrogencarbonate + 2 NH4(+). It functions in the pathway nitrogen metabolism; urea degradation; CO(2) and NH(3) from urea (urease route): step 1/1. In Mycobacterium bovis (strain BCG / Pasteur 1173P2), this protein is Urease subunit beta.